Consider the following 410-residue polypeptide: MKQELIERFTRYVKIDTQSNEESHTVPTTPGQIEFGKLLVEELKEIGLTEVMMDDNGYVMATLPANTDKDVPVIGFLAHLDTATDFTGKNVKPQIHENFDGNAITLNEELNVVLTPEQFPELPSYKGHTIITTDGTTLLGADDKAGLTEIMVAMNHLIHNPQIKHGKIRVAFTPDEEIGRGPAHFDVEAFGASFAYTMDGGPLGGLEYESFNAAGAKLTFNGTNTHPGTAKNKMRNATKLAMEFNGHLPVEEAPEYTEGYEGFYHLLSLNGDVEQSKAYYIVRDFDRENFEARKNNVKNIVKNMQEKYGEDAVVLEMNDQYYNMLEKIEPVREIVDIAYEAMKSLDIEPNIHPIRGGTDGSQLSYMGLPTPNIFTGGENYHGKFEYVSVDNMEKAVQVIVEIARRFEEQA.

Position 79 (histidine 79) interacts with Zn(2+). Aspartate 81 is a catalytic residue. Aspartate 142 provides a ligand contact to Zn(2+). Glutamate 176 acts as the Proton acceptor in catalysis. 3 residues coordinate Zn(2+): glutamate 177, aspartate 199, and histidine 381.

Belongs to the peptidase M20B family. Requires Zn(2+) as cofactor.

The protein resides in the cytoplasm. It catalyses the reaction Release of the N-terminal residue from a tripeptide.. Cleaves the N-terminal amino acid of tripeptides. The chain is Peptidase T from Bacillus cereus (strain G9842).